A 341-amino-acid chain; its full sequence is Protein pelota homolog (341 aa).

Belongs to the eukaryotic release factor 1 family. Pelota subfamily. In terms of assembly, monomer. A divalent metal cation is required as a cofactor.

The protein localises to the cytoplasm. In terms of biological role, may function in recognizing stalled ribosomes, interact with stem-loop structures in stalled mRNA molecules, and effect endonucleolytic cleavage of the mRNA. May play a role in the release non-functional ribosomes and degradation of damaged mRNAs. Has endoribonuclease activity. The polypeptide is Protein pelota homolog (Methanospirillum hungatei JF-1 (strain ATCC 27890 / DSM 864 / NBRC 100397 / JF-1)).